Consider the following 1229-residue polypeptide: Vacuolar protein sorting-associated protein 8 homolog (1229 aa).

Residues 67-89 (EFGMPVPHATPTPSIGEDSTIRT) form a disordered region. The stretch at 901–1063 (ETTRLLSLHY…ILPHQELQSI (163 aa)) is one CHCR repeat. An RING-type; atypical zinc finger spans residues 1148 to 1189 (CSMCRQRLYDHSQVLIFGGCGHGIHEQCMEESETQFEECPRC).

Belongs to the VPS8 family. As to quaternary structure, component of the class C core vacuole/endosome tethering (CORVET) complex composed of at least Vps8, dor/Vps18, car/Vps33A and Vps16A; unlike in other species, Vps11 is not part of the Drosophila complex. Due to the reduced number of components the Drosophila CORVET complex is often referred to as the miniCORVET complex. Has a higher affinity than the homotypic fusion and vacuole protein sorting (HOPS) tethering complex-specific component lt/Vps41 for Vps16A, car/Vps33A and dor/Vps18, the core components shared by both tethering complexes.

Its subcellular location is the early endosome. Part of the class C core vacuole/endosome tethering (CORVET) complex involved in endo-lysosomal vesicle trafficking and lysosome biogenesis by facilitating docking and fusion of endosomal vesicles. The CORVET complex acts upstream of the homotypic fusion and vacuole protein sorting (HOPS) tethering complex but is not involved in autophagic flux. The CORVET complex may cooperate with the early endosomal tether Rbsn-5 to mediate endosomal fusion. As part of the CORVET complex recruited to endosomes by activated GTP-bound Rab5. Specifically required for endocytic trafficking in a subset of cells, such as hemocytes and nephrocytes, which are highly active in endocytosis. This Drosophila melanogaster (Fruit fly) protein is Vacuolar protein sorting-associated protein 8 homolog.